Here is a 108-residue protein sequence, read N- to C-terminus: Colipase B (108 aa).

The first 13 residues, 1–13, serve as a signal peptide directing secretion; sequence LALLLVALAVAYA. A propeptide spans 14–18 (enterostatin, activation peptide); sequence VPDPR. 5 disulfide bridges follow: C30–C41, C36–C52, C40–C74, C62–C82, and C76–C100. W65 contributes to the taurodeoxycholate binding site.

It belongs to the colipase family. Forms a 1:1 stoichiometric complex with pancreatic lipase. Expressed by the pancreas.

Its subcellular location is the secreted. Its function is as follows. Colipase is a cofactor of pancreatic lipase. It allows the lipase to anchor itself to the lipid-water interface. Without colipase the enzyme is washed off by bile salts, which have an inhibitory effect on the lipase. Functionally, enterostatin has a biological activity as a satiety signal. The chain is Colipase B (CLPS2) from Equus caballus (Horse).